The following is a 187-amino-acid chain: NADH-quinone oxidoreductase subunit C 2 (187 aa).

Residues 153 to 187 form a disordered region; the sequence is YKDKLNPFGAEGPPPTQPDLATRDIPQGRPSTPES.

It belongs to the complex I 30 kDa subunit family. NDH-1 is composed of 14 different subunits. Subunits NuoB, C, D, E, F, and G constitute the peripheral sector of the complex.

It is found in the cell inner membrane. It carries out the reaction a quinone + NADH + 5 H(+)(in) = a quinol + NAD(+) + 4 H(+)(out). Its function is as follows. NDH-1 shuttles electrons from NADH, via FMN and iron-sulfur (Fe-S) centers, to quinones in the respiratory chain. The immediate electron acceptor for the enzyme in this species is believed to be ubiquinone. Couples the redox reaction to proton translocation (for every two electrons transferred, four hydrogen ions are translocated across the cytoplasmic membrane), and thus conserves the redox energy in a proton gradient. The chain is NADH-quinone oxidoreductase subunit C 2 from Rhizobium etli (strain CIAT 652).